We begin with the raw amino-acid sequence, 149 residues long: Large ribosomal subunit protein bL9 (149 aa).

Belongs to the bacterial ribosomal protein bL9 family.

In terms of biological role, binds to the 23S rRNA. In Aquifex aeolicus (strain VF5), this protein is Large ribosomal subunit protein bL9.